We begin with the raw amino-acid sequence, 366 residues long: tRNA/tmRNA (uracil-C(5))-methyltransferase (366 aa).

S-adenosyl-L-methionine-binding residues include Gln190, Tyr218, Asn223, Glu239, and Asp299. Residue Cys324 is the Nucleophile of the active site. Glu358 serves as the catalytic Proton acceptor.

Belongs to the class I-like SAM-binding methyltransferase superfamily. RNA M5U methyltransferase family. TrmA subfamily.

The enzyme catalyses uridine(54) in tRNA + S-adenosyl-L-methionine = 5-methyluridine(54) in tRNA + S-adenosyl-L-homocysteine + H(+). It carries out the reaction uridine(341) in tmRNA + S-adenosyl-L-methionine = 5-methyluridine(341) in tmRNA + S-adenosyl-L-homocysteine + H(+). Functionally, dual-specificity methyltransferase that catalyzes the formation of 5-methyluridine at position 54 (m5U54) in all tRNAs, and that of position 341 (m5U341) in tmRNA (transfer-mRNA). This chain is tRNA/tmRNA (uracil-C(5))-methyltransferase, found in Citrobacter koseri (strain ATCC BAA-895 / CDC 4225-83 / SGSC4696).